A 380-amino-acid polypeptide reads, in one-letter code: D-threo-3-hydroxyaspartate dehydratase (380 aa).

Lys-43 bears the N6-(pyridoxal phosphate)lysine mark.

It belongs to the DSD1 family. As to quaternary structure, monomer. Pyridoxal 5'-phosphate serves as cofactor. Requires Mn(2+) as cofactor. Co(2+) is required as a cofactor. The cofactor is Ni(2+).

The catalysed reaction is (3R)-3-hydroxy-D-aspartate = oxaloacetate + NH4(+). Its activity is regulated as follows. Strongly inhibited by hydroxylamine. Modestly inhibited by EDTA. Catalyzes the deamination of D-threo-3-hydroxyaspartate (D-THA). Also exhibits dehydratase activity towards L-threo-3-hydroxyaspartate (L-THA), L-erythro-3-hydroxyaspartate (L-EHA) and D-serine. In Delftia sp. (strain HT23), this protein is D-threo-3-hydroxyaspartate dehydratase (dthadh).